A 149-amino-acid chain; its full sequence is Ribosome maturation factor RimP (149 aa).

The protein belongs to the RimP family.

It is found in the cytoplasm. Its function is as follows. Required for maturation of 30S ribosomal subunits. This Neisseria gonorrhoeae (strain NCCP11945) protein is Ribosome maturation factor RimP.